The following is a 253-amino-acid chain: Ubiquinone biosynthesis O-methyltransferase (253 aa).

The S-adenosyl-L-methionine site is built by R47, G78, D99, and M141.

This sequence belongs to the methyltransferase superfamily. UbiG/COQ3 family.

It catalyses the reaction a 3-demethylubiquinol + S-adenosyl-L-methionine = a ubiquinol + S-adenosyl-L-homocysteine + H(+). The catalysed reaction is a 3-(all-trans-polyprenyl)benzene-1,2-diol + S-adenosyl-L-methionine = a 2-methoxy-6-(all-trans-polyprenyl)phenol + S-adenosyl-L-homocysteine + H(+). It participates in cofactor biosynthesis; ubiquinone biosynthesis. Functionally, O-methyltransferase that catalyzes the 2 O-methylation steps in the ubiquinone biosynthetic pathway. In Rhodopseudomonas palustris (strain ATCC BAA-98 / CGA009), this protein is Ubiquinone biosynthesis O-methyltransferase.